Reading from the N-terminus, the 274-residue chain is Ribosomal RNA small subunit methyltransferase A (274 aa).

Positions 15, 17, 42, 64, 89, and 108 each coordinate S-adenosyl-L-methionine.

Belongs to the class I-like SAM-binding methyltransferase superfamily. rRNA adenine N(6)-methyltransferase family. RsmA subfamily.

It localises to the cytoplasm. The enzyme catalyses adenosine(1518)/adenosine(1519) in 16S rRNA + 4 S-adenosyl-L-methionine = N(6)-dimethyladenosine(1518)/N(6)-dimethyladenosine(1519) in 16S rRNA + 4 S-adenosyl-L-homocysteine + 4 H(+). Functionally, specifically dimethylates two adjacent adenosines (A1518 and A1519) in the loop of a conserved hairpin near the 3'-end of 16S rRNA in the 30S particle. May play a critical role in biogenesis of 30S subunits. The protein is Ribosomal RNA small subunit methyltransferase A of Prochlorococcus marinus (strain AS9601).